We begin with the raw amino-acid sequence, 367 residues long: Quinolinate synthase (367 aa).

Positions 45 and 62 each coordinate iminosuccinate. C109 serves as a coordination point for [4Fe-4S] cluster. Residues 140–142 (YVN) and S161 contribute to the iminosuccinate site. Position 229 (C229) interacts with [4Fe-4S] cluster. Residues 255 to 257 (HPE) and T272 each bind iminosuccinate. C319 contacts [4Fe-4S] cluster.

The protein belongs to the quinolinate synthase family. Type 3 subfamily. [4Fe-4S] cluster serves as cofactor.

The protein resides in the cytoplasm. It catalyses the reaction iminosuccinate + dihydroxyacetone phosphate = quinolinate + phosphate + 2 H2O + H(+). The protein operates within cofactor biosynthesis; NAD(+) biosynthesis; quinolinate from iminoaspartate: step 1/1. In terms of biological role, catalyzes the condensation of iminoaspartate with dihydroxyacetone phosphate to form quinolinate. The chain is Quinolinate synthase from Anoxybacillus flavithermus (strain DSM 21510 / WK1).